A 251-amino-acid polypeptide reads, in one-letter code: tRNA pseudouridine synthase A (251 aa).

The active-site Nucleophile is the aspartate 52. Tyrosine 113 lines the substrate pocket.

Belongs to the tRNA pseudouridine synthase TruA family. As to quaternary structure, homodimer.

The catalysed reaction is uridine(38/39/40) in tRNA = pseudouridine(38/39/40) in tRNA. Its function is as follows. Formation of pseudouridine at positions 38, 39 and 40 in the anticodon stem and loop of transfer RNAs. The protein is tRNA pseudouridine synthase A of Brucella anthropi (strain ATCC 49188 / DSM 6882 / CCUG 24695 / JCM 21032 / LMG 3331 / NBRC 15819 / NCTC 12168 / Alc 37) (Ochrobactrum anthropi).